Reading from the N-terminus, the 166-residue chain is UPF0336 protein ML2425 (166 aa).

In terms of domain architecture, MaoC-like spans 10 to 131 (LIGKHYRQLD…VIAEVRSEVT (122 aa)).

The protein belongs to the UPF0336 family.

In Mycobacterium leprae (strain TN), this protein is UPF0336 protein ML2425.